Here is a 431-residue protein sequence, read N- to C-terminus: MQKSEQLFARAQKHIPGGVNSPVRAFRAVGGTPPFIEKADGPYLYDADGKQYIDYVQSWGPMVLGHNNPIIRQAVIDAAQNGLSFGAPTEAEVTIADLVSELVPSMEMLRMVNSGTEATMSAIRLARGYTKRDKILKFEGCYHGHADALLVKAGSGALTFGVPSSPGIPADFAKHTLTMEYNNIDSVVQAFEQYPDDIACIIVEPVAGNMNCIPPVHGFLQGLRDVCDKYGAVLIFDEVMTGFRVALGGAQAKYNIVPDLTCLGKVIGGGMPVGAFGGKRDIMQHIAPSGPVYQAGTLSGNPVAMAAGLAALNQVKRPGLYEELSEATKTLAEGIKAIANGLGIPMSVNYAGSMFGLFFTDVECVTNYQQAINCNTEQFNHFYHGMLENGVYLAPASYEAGFVSAQHSPEIIQQTLQIAEKVLADVAKKFG.

Position 265 is an N6-(pyridoxal phosphate)lysine (Lys-265).

This sequence belongs to the class-III pyridoxal-phosphate-dependent aminotransferase family. HemL subfamily. As to quaternary structure, homodimer. Pyridoxal 5'-phosphate serves as cofactor.

It is found in the cytoplasm. It catalyses the reaction (S)-4-amino-5-oxopentanoate = 5-aminolevulinate. It functions in the pathway porphyrin-containing compound metabolism; protoporphyrin-IX biosynthesis; 5-aminolevulinate from L-glutamyl-tRNA(Glu): step 2/2. This is Glutamate-1-semialdehyde 2,1-aminomutase from Pseudoalteromonas atlantica (strain T6c / ATCC BAA-1087).